A 157-amino-acid chain; its full sequence is 6,7-dimethyl-8-ribityllumazine synthase (157 aa).

5-amino-6-(D-ribitylamino)uracil is bound by residues Phe26, 60–62, and 86–88; these read ALE and AVI. (2S)-2-hydroxy-3-oxobutyl phosphate is bound at residue 91-92; it reads ET. Residue His94 is the Proton donor of the active site. A 5-amino-6-(D-ribitylamino)uracil-binding site is contributed by Asn119. Arg133 is a (2S)-2-hydroxy-3-oxobutyl phosphate binding site.

The protein belongs to the DMRL synthase family.

The catalysed reaction is (2S)-2-hydroxy-3-oxobutyl phosphate + 5-amino-6-(D-ribitylamino)uracil = 6,7-dimethyl-8-(1-D-ribityl)lumazine + phosphate + 2 H2O + H(+). The protein operates within cofactor biosynthesis; riboflavin biosynthesis; riboflavin from 2-hydroxy-3-oxobutyl phosphate and 5-amino-6-(D-ribitylamino)uracil: step 1/2. Its function is as follows. Catalyzes the formation of 6,7-dimethyl-8-ribityllumazine by condensation of 5-amino-6-(D-ribitylamino)uracil with 3,4-dihydroxy-2-butanone 4-phosphate. This is the penultimate step in the biosynthesis of riboflavin. This is 6,7-dimethyl-8-ribityllumazine synthase from Laribacter hongkongensis (strain HLHK9).